We begin with the raw amino-acid sequence, 390 residues long: Aspergillopepsin-1 (390 aa).

Positions 1–19 (MVNTSLLAALTAYAVAVSA) are cleaved as a signal peptide. Residues 20–67 (APTAPQVKGFSVNQVAVPKGVYRHPAAQLAKAYGKYHATVPTQVAAAA) constitute a propeptide, activation peptide. A glycan (O-linked (Man...) threonine) is linked at threonine 70. The region spanning 84 to 387 (YITQVTVGDD…DASGPRLGFA (304 aa)) is the Peptidase A1 domain. Residues aspartate 100 and aspartate 281 contribute to the active site.

The protein belongs to the peptidase A1 family.

The protein localises to the secreted. It carries out the reaction Hydrolysis of proteins with broad specificity. Generally favors hydrophobic residues in P1 and P1', but also accepts Lys in P1, which leads to activation of trypsinogen. Does not clot milk.. With respect to regulation, inhibited by the microbial peptide pepstatin. Secreted aspartic endopeptidase that allows assimilation of proteinaceous substrates. The scissile peptide bond is attacked by a nucleophilic water molecule activated by two aspartic residues in the active site. Shows a broad primary substrate specificity. Favors hydrophobic residues at the P1 and P1' positions, but also accepts a lysine residue in the P1 position, leading to the activation of trypsinogen and chymotrypsinogen A. This Aspergillus oryzae (Yellow koji mold) protein is Aspergillopepsin-1 (pepA).